The primary structure comprises 71 residues: Conotoxin LvVIIB (71 aa).

Positions 1 to 17 (VLIIAVLFLAASELVTA) are cleaved as a signal peptide. Residues 18-42 (DYTRDEWQYRAASLRDAMRNFRDTR) constitute a propeptide that is removed on maturation. Cystine bridges form between Cys-43/Cys-57, Cys-50/Cys-62, and Cys-56/Cys-69.

Belongs to the conotoxin O1 superfamily. As to expression, expressed by the venom duct.

Its subcellular location is the secreted. The polypeptide is Conotoxin LvVIIB (Conus lividus (Livid cone)).